Consider the following 158-residue polypeptide: NAD(P)H-quinone oxidoreductase subunit J, chloroplastic (158 aa).

The protein belongs to the complex I 30 kDa subunit family. As to quaternary structure, NDH is composed of at least 16 different subunits, 5 of which are encoded in the nucleus.

The protein resides in the plastid. Its subcellular location is the chloroplast thylakoid membrane. It catalyses the reaction a plastoquinone + NADH + (n+1) H(+)(in) = a plastoquinol + NAD(+) + n H(+)(out). The catalysed reaction is a plastoquinone + NADPH + (n+1) H(+)(in) = a plastoquinol + NADP(+) + n H(+)(out). NDH shuttles electrons from NAD(P)H:plastoquinone, via FMN and iron-sulfur (Fe-S) centers, to quinones in the photosynthetic chain and possibly in a chloroplast respiratory chain. The immediate electron acceptor for the enzyme in this species is believed to be plastoquinone. Couples the redox reaction to proton translocation, and thus conserves the redox energy in a proton gradient. This is NAD(P)H-quinone oxidoreductase subunit J, chloroplastic from Illicium oligandrum (Star anise).